The chain runs to 382 residues: Acetylserotonin O-methyltransferase (382 aa).

S-adenosyl-L-homocysteine contacts are provided by G218, D241, D261, M262, and K275. The active-site Proton acceptor is H279. Residues E308 and E347 contribute to the active site.

This sequence belongs to the class I-like SAM-binding methyltransferase superfamily. Cation-independent O-methyltransferase family.

The protein localises to the cytoplasm. It carries out the reaction N-acetylserotonin + S-adenosyl-L-methionine = melatonin + S-adenosyl-L-homocysteine + H(+). The protein operates within aromatic compound metabolism; melatonin biosynthesis; melatonin from serotonin: step 1/2. Its function is as follows. Methyltransferase which catalyzes the transfer of a methyl group onto N-acetylserotonin, producing melatonin (N-acetyl-5-methoxytryptamine). Does not seem to possess caffeate O-methyltransferase activity. Implicated in melatonin-dependent circadian dynamics of stomatal aperture to minimize night water loss and promote drought tolerance. Prevents seed germination by promoting melatonin biosynthesis. Promotes melatonin-triggered defense responses to the necrotrophic fungus Botrytis cinerea. Functionally, (Microbial infection) Promotes melatonin-triggered defense responses to the necrotrophic fungus Botrytis cinerea. This is Acetylserotonin O-methyltransferase from Arabidopsis thaliana (Mouse-ear cress).